The chain runs to 433 residues: Glutamate-1-semialdehyde 2,1-aminomutase (433 aa).

An N6-(pyridoxal phosphate)lysine modification is found at lysine 273.

It belongs to the class-III pyridoxal-phosphate-dependent aminotransferase family. HemL subfamily. As to quaternary structure, homodimer. The cofactor is pyridoxal 5'-phosphate.

Its subcellular location is the cytoplasm. It catalyses the reaction (S)-4-amino-5-oxopentanoate = 5-aminolevulinate. The protein operates within porphyrin-containing compound metabolism; protoporphyrin-IX biosynthesis; 5-aminolevulinate from L-glutamyl-tRNA(Glu): step 2/2. In Ralstonia nicotianae (strain ATCC BAA-1114 / GMI1000) (Ralstonia solanacearum), this protein is Glutamate-1-semialdehyde 2,1-aminomutase.